The sequence spans 602 residues: T-box transcription factor TBX15 (602 aa).

A disordered region spans residues 43-95 (SMEALSPAGPLGDTDDPATHGLEPHPDSEQSTGSDSEVLTERTSCSFSTHTDL). Positions 71–94 (EQSTGSDSEVLTERTSCSFSTHTD) are enriched in polar residues. The T-box DNA-binding region spans 122-304 (LWKRFHDIGT…RNPFAKGFRD (183 aa)). T330 bears the Phosphothreonine mark. 2 disordered regions span residues 338 to 369 (QKQQ…LSPS) and 425 to 444 (QSGT…QRTP). Residues 346–369 (GTSPTTSSTGTPSPSASSHLLSPS) show a composition bias toward low complexity.

In terms of assembly, can form a heterodimer with TBX18.

Its subcellular location is the nucleus. Its function is as follows. Probable transcriptional regulator involved in the development of the skeleton of the limb, vertebral column and head. Acts by controlling the number of mesenchymal precursor cells and chondrocytes. The chain is T-box transcription factor TBX15 (Tbx15) from Mus musculus (Mouse).